A 351-amino-acid polypeptide reads, in one-letter code: sn-glycerol-3-phosphate import ATP-binding protein UgpC (351 aa).

An ABC transporter domain is found at 4–235; that stretch reads IVLDNVRKSY…PASTFVATFI (232 aa). 37 to 44 is a binding site for ATP; the sequence is GPSGCGKS.

It belongs to the ABC transporter superfamily. sn-glycerol-3-phosphate importer (TC 3.A.1.1.3) family. As to quaternary structure, the complex is composed of two ATP-binding proteins (UgpC), two transmembrane proteins (UgpA and UgpE) and a solute-binding protein (UgpB).

It is found in the cell inner membrane. The enzyme catalyses sn-glycerol 3-phosphate(out) + ATP + H2O = sn-glycerol 3-phosphate(in) + ADP + phosphate + H(+). Its function is as follows. Part of the ABC transporter complex UgpBAEC involved in sn-glycerol-3-phosphate (G3P) import. Responsible for energy coupling to the transport system. The chain is sn-glycerol-3-phosphate import ATP-binding protein UgpC from Brucella abortus biovar 1 (strain 9-941).